The sequence spans 152 residues: Ribosome maturation factor RimP (152 aa).

Belongs to the RimP family.

Its subcellular location is the cytoplasm. In terms of biological role, required for maturation of 30S ribosomal subunits. The protein is Ribosome maturation factor RimP of Pectobacterium atrosepticum (strain SCRI 1043 / ATCC BAA-672) (Erwinia carotovora subsp. atroseptica).